Here is a 592-residue protein sequence, read N- to C-terminus: Transmembrane 9 superfamily member 3 (592 aa).

An N-terminal signal peptide occupies residues 1–19 (MRLPTTLLLFIGALIFSGA). The Lumenal segment spans residues 20 to 229 (GTVRSDASDH…SLPHHLEIHW (210 aa)). The helical transmembrane segment at 230–250 (FSIINSCVTVLLLTGFLATIL) threads the bilayer. At 251-302 (MRVLKNDFMKYAQDEEAADDQEETGWKYIHGDVFRFPKNKSLFAASLGSGTQ) the chain is on the cytoplasmic side. A helical transmembrane segment spans residues 303-323 (LFTLTIFIFMLSLVGVFYPYN). The Lumenal segment spans residues 324 to 325 (RG). Residues 326–346 (ALFTALVVIYALTSGIAGYTA) traverse the membrane as a helical segment. Residues 347–365 (SSFYCQLEGKNWVRNLLLT) are Cytoplasmic-facing. The chain crosses the membrane as a helical span at residues 366–386 (GGLFCGPLFLTFCFLNTVAIA). Over 387-397 (YSATAALPFGT) the chain is Lumenal. Residues 398-418 (IIVIVLIWTLVTSPLLVLGGI) traverse the membrane as a helical segment. Residues 419 to 452 (AGKNSKAEFQAPVRTTKYPREIPPLPWYRSAVPQ) lie on the Cytoplasmic side of the membrane. A helical transmembrane segment spans residues 453 to 473 (MAMAGFLPFSAIYIELYYIFA). The Lumenal segment spans residues 474–485 (SVWGHRIYTIYS). Residues 486-506 (ILFIVFIILLIVTAFITVALT) traverse the membrane as a helical segment. Topologically, residues 507–521 (YFQLAAEDHEWWWRS) are cytoplasmic. A helical membrane pass occupies residues 522 to 542 (FLCGGSTGLFIYAYCLYYYYA). The Lumenal portion of the chain corresponds to 543–553 (RSDMSGFMQTS). A helical membrane pass occupies residues 554–574 (FFFGYMACICYGFFLMLGTVG). The Cytoplasmic segment spans residues 575-592 (FRAALLFVRHIYRSIKCE). Residues 581-586 (FVRHIY) carry the Endoplasmic reticulum export signal motif. Residues 590 to 592 (KCE) carry the Golgi retention signal motif.

It belongs to the nonaspanin (TM9SF) (TC 9.A.2) family.

The protein resides in the endosome membrane. It is found in the golgi apparatus membrane. This is Transmembrane 9 superfamily member 3 from Arabidopsis thaliana (Mouse-ear cress).